The sequence spans 158 residues: MTHQRHRREVVARLLRARRIGTQEELLEALRAGGIEATQATLSRDLAQLGARRVSRPEGGTVYELPAGAAERDGLATLRGLVSEVASNASLVVIRTHPGSAPAIARAIDLAGLPDVLGTIAGDDTIFVAPAGELRARKLATRLADLLGAPVAGEGPAQ.

This sequence belongs to the ArgR family.

It is found in the cytoplasm. It participates in amino-acid biosynthesis; L-arginine biosynthesis [regulation]. Its function is as follows. Regulates arginine biosynthesis genes. The chain is Arginine repressor from Anaeromyxobacter sp. (strain Fw109-5).